We begin with the raw amino-acid sequence, 550 residues long: T-complex protein 1 subunit eta (550 aa).

Residues 529-550 are disordered; sequence SESANAGMMPPQGAGRGRGMPM.

Belongs to the TCP-1 chaperonin family. Heterooligomeric complex of about 850 to 900 kDa that forms two stacked rings, 12 to 16 nm in diameter.

The protein resides in the cytoplasm. In terms of biological role, molecular chaperone; assists the folding of proteins upon ATP hydrolysis. Known to play a role, in vitro, in the folding of actin and tubulin. In yeast may play a role in mitotic spindle formation. The chain is T-complex protein 1 subunit eta (CCT7) from Saccharomyces cerevisiae (strain ATCC 204508 / S288c) (Baker's yeast).